The chain runs to 349 residues: Eukaryotic translation initiation factor 3 subunit I (349 aa).

6 WD repeats span residues 8–49, 51–91, 93–135, 148–187, 197–239, and 295–336; these read GHER…GTLE, HIGT…QSWE, PTPV…DYTK, SDAKKVTVAGWSANGDFIIAGHEDGYVSKYNSSTGEFIET, EKIA…KVYK, and GHFG…FEFD.

This sequence belongs to the eIF-3 subunit I family. As to quaternary structure, component of the eukaryotic translation initiation factor 3 (eIF-3) complex.

Its subcellular location is the cytoplasm. Its function is as follows. Component of the eukaryotic translation initiation factor 3 (eIF-3) complex, which is involved in protein synthesis of a specialized repertoire of mRNAs and, together with other initiation factors, stimulates binding of mRNA and methionyl-tRNAi to the 40S ribosome. The eIF-3 complex specifically targets and initiates translation of a subset of mRNAs involved in cell proliferation. The polypeptide is Eukaryotic translation initiation factor 3 subunit I (Debaryomyces hansenii (strain ATCC 36239 / CBS 767 / BCRC 21394 / JCM 1990 / NBRC 0083 / IGC 2968) (Yeast)).